Reading from the N-terminus, the 93-residue chain is UPF0473 protein CHY_0543 (93 aa).

The protein belongs to the UPF0473 family.

This is UPF0473 protein CHY_0543 from Carboxydothermus hydrogenoformans (strain ATCC BAA-161 / DSM 6008 / Z-2901).